The following is a 99-amino-acid chain: NADH-quinone oxidoreductase subunit K (99 aa).

3 helical membrane-spanning segments follow: residues 3 to 23 (PDNYLYLAALIFTIGAAGVML), 28 to 48 (IVVFMSVELMLNAANLAFVTF), and 59 to 79 (VIAFFTMVVAATEVVVGLGII).

Belongs to the complex I subunit 4L family. In terms of assembly, NDH-1 is composed of 14 different subunits. Subunits NuoA, H, J, K, L, M, N constitute the membrane sector of the complex.

The protein resides in the cell membrane. It catalyses the reaction a quinone + NADH + 5 H(+)(in) = a quinol + NAD(+) + 4 H(+)(out). NDH-1 shuttles electrons from NADH, via FMN and iron-sulfur (Fe-S) centers, to quinones in the respiratory chain. The immediate electron acceptor for the enzyme in this species is believed to be a menaquinone. Couples the redox reaction to proton translocation (for every two electrons transferred, four hydrogen ions are translocated across the cytoplasmic membrane), and thus conserves the redox energy in a proton gradient. This is NADH-quinone oxidoreductase subunit K from Mycobacteroides abscessus (strain ATCC 19977 / DSM 44196 / CCUG 20993 / CIP 104536 / JCM 13569 / NCTC 13031 / TMC 1543 / L948) (Mycobacterium abscessus).